The chain runs to 124 residues: Urotensin-2 (124 aa).

The signal sequence occupies residues 1-20 (MYKLASCCLLFIGFLNPLLS). Positions 21-110 (LPLLDSREIS…HLLARIWKPY (90 aa)) are excised as a propeptide. Cys-118 and Cys-123 form a disulfide bridge.

It belongs to the urotensin-2 family. Brain specific.

It is found in the secreted. In terms of biological role, highly potent vasoconstrictor. The polypeptide is Urotensin-2 (UTS2) (Homo sapiens (Human)).